The sequence spans 166 residues: Cyclin-dependent kinase 4 inhibitor D (166 aa).

Met-1 is modified (N-acetylmethionine). 4 ANK repeats span residues 41–69, 73–102, 106–135, and 138–166; these read FGKT…SPNV, SGTT…DVNA, TGAL…LHHR, and TGLT…VAPL.

This sequence belongs to the CDKN2 cyclin-dependent kinase inhibitor family. As to quaternary structure, interacts with CDK6.

Its subcellular location is the nucleus. The protein resides in the cytoplasm. Interacts strongly with CDK4 and CDK6 and inhibits them. The polypeptide is Cyclin-dependent kinase 4 inhibitor D (CDKN2D) (Bos taurus (Bovine)).